The following is a 152-amino-acid chain: Deoxyuridine 5'-triphosphate nucleotidohydrolase (152 aa).

Residues 71 to 73 (RSG), N84, 88 to 90 (LID), and M98 each bind substrate.

Belongs to the dUTPase family. It depends on Mg(2+) as a cofactor.

The enzyme catalyses dUTP + H2O = dUMP + diphosphate + H(+). The protein operates within pyrimidine metabolism; dUMP biosynthesis; dUMP from dCTP (dUTP route): step 2/2. Its function is as follows. This enzyme is involved in nucleotide metabolism: it produces dUMP, the immediate precursor of thymidine nucleotides and it decreases the intracellular concentration of dUTP so that uracil cannot be incorporated into DNA. This Shewanella sp. (strain ANA-3) protein is Deoxyuridine 5'-triphosphate nucleotidohydrolase.